Here is a 547-residue protein sequence, read N- to C-terminus: Puff-specific protein Bx42 (547 aa).

The tract at residues 177 to 343 (AQYIRYTPSQ…AREERAGLRN (167 aa)) is SNW. Serine 227 and serine 235 each carry phosphoserine. Disordered stretches follow at residues 333-398 (RARE…ERDI) and 486-547 (QFSG…SKRD). Basic and acidic residues-rich tracts occupy residues 358 to 398 (EVRE…ERDI) and 526 to 539 (KRAEEKNNERSSHS).

The protein belongs to the SNW family.

It is found in the nucleus. Its function is as follows. May play a role in chromatin structure and function. The polypeptide is Puff-specific protein Bx42 (Bx42) (Drosophila melanogaster (Fruit fly)).